Reading from the N-terminus, the 204-residue chain is Recombination protein RecR (204 aa).

The C4-type zinc-finger motif lies at Cys59–Cys74. The Toprim domain maps to Thr82–Pro181.

The protein belongs to the RecR family.

May play a role in DNA repair. It seems to be involved in an RecBC-independent recombinational process of DNA repair. It may act with RecF and RecO. This chain is Recombination protein RecR, found in Cupriavidus metallidurans (strain ATCC 43123 / DSM 2839 / NBRC 102507 / CH34) (Ralstonia metallidurans).